The following is a 389-amino-acid chain: 1-deoxy-D-xylulose 5-phosphate reductoisomerase (389 aa).

Residues S11, G12, S13, V14, N39, and N122 each contribute to the NADPH site. Position 123 (K123) interacts with 1-deoxy-D-xylulose 5-phosphate. E124 provides a ligand contact to NADPH. A Mn(2+)-binding site is contributed by D148. Residues S149, E150, S174, and H197 each contribute to the 1-deoxy-D-xylulose 5-phosphate site. E150 contacts Mn(2+). G203 serves as a coordination point for NADPH. 4 residues coordinate 1-deoxy-D-xylulose 5-phosphate: S210, N215, K216, and E219. Position 219 (E219) interacts with Mn(2+).

The protein belongs to the DXR family. It depends on Mg(2+) as a cofactor. Mn(2+) serves as cofactor.

It carries out the reaction 2-C-methyl-D-erythritol 4-phosphate + NADP(+) = 1-deoxy-D-xylulose 5-phosphate + NADPH + H(+). It participates in isoprenoid biosynthesis; isopentenyl diphosphate biosynthesis via DXP pathway; isopentenyl diphosphate from 1-deoxy-D-xylulose 5-phosphate: step 1/6. Catalyzes the NADPH-dependent rearrangement and reduction of 1-deoxy-D-xylulose-5-phosphate (DXP) to 2-C-methyl-D-erythritol 4-phosphate (MEP). This chain is 1-deoxy-D-xylulose 5-phosphate reductoisomerase, found in Leptospira interrogans serogroup Icterohaemorrhagiae serovar copenhageni (strain Fiocruz L1-130).